The primary structure comprises 491 residues: UDP-glycosyltransferase 73C1 (491 aa).

UDP-alpha-D-glucose contacts are provided by residues Ser292, 352–354, 369–377, and 391–394; these read SPQ, HCGWNSTLE, and FGDQ.

This sequence belongs to the UDP-glycosyltransferase family.

Its function is as follows. Involved in the O-glucosylation of trans-zeatin and dihydrozeatin. Also active in vitro on cis-zeatin, dihydrozeatin-9-N-Glc, and olomoucine. Can detoxify the explosive 2,4,6-trinitrotoluene in plant by forming O- or C-glucose conjugates. The chain is UDP-glycosyltransferase 73C1 (UGT73C1) from Arabidopsis thaliana (Mouse-ear cress).